The sequence spans 354 residues: Protein RecA (354 aa).

67-74 (GPESSGKT) serves as a coordination point for ATP.

The protein belongs to the RecA family.

Its subcellular location is the cytoplasm. Its function is as follows. Can catalyze the hydrolysis of ATP in the presence of single-stranded DNA, the ATP-dependent uptake of single-stranded DNA by duplex DNA, and the ATP-dependent hybridization of homologous single-stranded DNAs. It interacts with LexA causing its activation and leading to its autocatalytic cleavage. The sequence is that of Protein RecA from Chlamydia muridarum (strain MoPn / Nigg).